Here is a 150-residue protein sequence, read N- to C-terminus: Endoribonuclease YbeY (150 aa).

Zn(2+)-binding residues include H115, H119, and H125.

It belongs to the endoribonuclease YbeY family. The cofactor is Zn(2+).

It localises to the cytoplasm. Its function is as follows. Single strand-specific metallo-endoribonuclease involved in late-stage 70S ribosome quality control and in maturation of the 3' terminus of the 16S rRNA. This is Endoribonuclease YbeY from Aquifex aeolicus (strain VF5).